Reading from the N-terminus, the 150-residue chain is Thyroid hormone-inducible hepatic protein (150 aa).

The tract at residues 83–105 (KVAGNEGSEAENEAAETEEAEED) is disordered. Ser-90 is subject to Phosphoserine. Acidic residues predominate over residues 90 to 105 (SEAENEAAETEEAEED).

This sequence belongs to the SPOT14 family. Homodimer. Heterodimer with MID1IP1. Interacts with THRB and PLAGL1. In terms of tissue distribution, highly expressed in liver, lactating mammary gland, epididymal, retroperitoneal and brown fat. Mainly expressed in tissues that synthesize triglycerides.

The protein localises to the nucleus. It localises to the cytoplasm. Functionally, plays a role in the regulation of lipogenesis, especially in lactating mammary gland. Important for the biosynthesis of triglycerides with medium-length fatty acid chains. May modulate lipogenesis by interacting with MID1IP1 and preventing its interaction with ACACA. May function as transcriptional coactivator. May modulate the transcription factor activity of THRB. The polypeptide is Thyroid hormone-inducible hepatic protein (Thrsp) (Rattus norvegicus (Rat)).